The primary structure comprises 219 residues: Probable nicotinate-nucleotide adenylyltransferase (219 aa).

Belongs to the NadD family.

It carries out the reaction nicotinate beta-D-ribonucleotide + ATP + H(+) = deamido-NAD(+) + diphosphate. The protein operates within cofactor biosynthesis; NAD(+) biosynthesis; deamido-NAD(+) from nicotinate D-ribonucleotide: step 1/1. Functionally, catalyzes the reversible adenylation of nicotinate mononucleotide (NaMN) to nicotinic acid adenine dinucleotide (NaAD). The polypeptide is Probable nicotinate-nucleotide adenylyltransferase (Pseudoalteromonas atlantica (strain T6c / ATCC BAA-1087)).